The primary structure comprises 200 residues: Putative protein ATXN8OS (200 aa).

The disordered stretch occupies residues 19 to 39 (PFSGLKEEEEEDGEDDEEEEE). Over residues 25 to 39 (EEEEEDGEDDEEEEE) the composition is skewed to acidic residues.

Expressed in brain. Expressed in muscle tissues (at protein level).

The protein resides in the cytoplasm. This Homo sapiens (Human) protein is Putative protein ATXN8OS.